The following is a 267-amino-acid chain: Myeloid leukemia factor 1 (267 aa).

A phosphoserine mark is found at S6, S8, S32, and S34. Residues R39 to A67 are disordered. The interaction with COPS3 stretch occupies residues R50–Q125.

Belongs to the MLF family. Interacts with CENPU. Also interacts with NRBP1/MADM, YWHAZ/14-3-3-zeta and HNRPUL2/MANP. NRBP1 recruits a serine kinase which phosphorylates both itself and MLF1. Phosphorylated MLF1 then binds to YWHAZ and is retained in the cytoplasm. Retained in the nucleus by binding to HNRPUL2. Binds to COPS3/CSN3 which is required for suppression of COP1 and activation of p53. Post-translationally, phosphorylation is required for binding to YWHAZ. Highly expressed in skeletal muscle, heart, testis. Also found in lung, but not in spleen, thymus, bone marrow, liver and kidney.

The protein resides in the cytoplasm. It localises to the nucleus. Its subcellular location is the cell projection. The protein localises to the cilium. It is found in the cytoskeleton. The protein resides in the cilium basal body. Involved in lineage commitment of primary hemopoietic progenitors by restricting erythroid formation and enhancing myeloid formation. Interferes with erythropoietin-induced erythroid terminal differentiation by preventing cells from exiting the cell cycle through suppression of CDKN1B/p27Kip1 levels. Suppresses COP1 activity via CSN3 which activates p53 and induces cell cycle arrest. Binds DNA and affects the expression of a number of genes so may function as a transcription factor in the nucleus. In Mus musculus (Mouse), this protein is Myeloid leukemia factor 1 (Mlf1).